The sequence spans 237 residues: Phosphoribosylaminoimidazole-succinocarboxamide synthase (237 aa).

The protein belongs to the SAICAR synthetase family.

It carries out the reaction 5-amino-1-(5-phospho-D-ribosyl)imidazole-4-carboxylate + L-aspartate + ATP = (2S)-2-[5-amino-1-(5-phospho-beta-D-ribosyl)imidazole-4-carboxamido]succinate + ADP + phosphate + 2 H(+). It functions in the pathway purine metabolism; IMP biosynthesis via de novo pathway; 5-amino-1-(5-phospho-D-ribosyl)imidazole-4-carboxamide from 5-amino-1-(5-phospho-D-ribosyl)imidazole-4-carboxylate: step 1/2. In Listeria monocytogenes serotype 4a (strain HCC23), this protein is Phosphoribosylaminoimidazole-succinocarboxamide synthase.